The following is a 496-amino-acid chain: Solute carrier family 2, facilitated glucose transporter member 3 (496 aa).

Residues 1–10 (MGTQKVTPAL) are Cytoplasmic-facing. The chain crosses the membrane as a helical span at residues 11–32 (IFAITVATIGSFQFGYNTGVIN). At 33 to 64 (APEKIIKEFINKTLTDKGNAPPSEVLLTSLWS) the chain is on the extracellular side. N-linked (GlcNAc...) asparagine glycosylation is present at N43. The chain crosses the membrane as a helical span at residues 65–85 (LSVAIFSVGGMIGSFSVGLFV). The Cytoplasmic segment spans residues 86 to 90 (NRFGR). Residues 91-111 (RNSMLIVNLLAVTGGCFMGLC) traverse the membrane as a helical segment. Over 112–118 (KVAKSVE) the chain is Extracellular. A helical membrane pass occupies residues 119–142 (MLILGRLVIGLFCGLCTGFVPMYI). The Cytoplasmic portion of the chain corresponds to 143 to 153 (GEISPTALRGA). A helical membrane pass occupies residues 154-174 (FGTLNQLGIVVGILVAQIFGL). Residue Q159 participates in D-glucose binding. Over 175 to 183 (EFILGSEEL) the chain is Extracellular. The helical transmembrane segment at 184 to 204 (WPLLLGFTILPAILQSAALPF) threads the bilayer. Topologically, residues 205–269 (CPESPRFLLI…LFRVSSYRQP (65 aa)) are cytoplasmic. T232 is subject to Phosphothreonine. Residues 270-290 (IIISIVLQLSQQLSGINAVFY) form a helical membrane-spanning segment. The important for selectivity against fructose stretch occupies residues 277-279 (QLS). D-glucose-binding positions include 280–281 (QQ) and N286. Residues 291–304 (YSTGIFKDAGVQEP) lie on the Extracellular side of the membrane. A helical transmembrane segment spans residues 305 to 325 (IYATIGAGVVNTIFTVVSLFL). Residue N315 coordinates D-glucose. The Cytoplasmic portion of the chain corresponds to 326-331 (VERAGR). A helical transmembrane segment spans residues 332-352 (RTLHMIGLGGMAFCSTLMTVS). Residues 353–363 (LLLKDNYNGMS) are Extracellular-facing. Residues 364–389 (FVCIGAILVFVAFFEIGPGPIPWFIV) traverse the membrane as a helical segment. Residues E378 and W386 each coordinate D-glucose. At 390–399 (AELFSQGPRP) the chain is on the cytoplasmic side. The helical transmembrane segment at 400–420 (AAMAVAGCSNWTSNFLVGLLF) threads the bilayer. Residues 421 to 429 (PSAAHYLGA) are Extracellular-facing. A helical transmembrane segment spans residues 430-450 (YVFIIFTGFLITFLAFTFFKV). At 451 to 496 (PETRGRTFEDITRAFEGQAHGADRSGKDGVMEMNSIEPAKETTTNV) the chain is on the cytoplasmic side. A phosphoserine mark is found at S475 and S485. T492 bears the Phosphothreonine mark.

This sequence belongs to the major facilitator superfamily. Sugar transporter (TC 2.A.1.1) family. Glucose transporter subfamily. As to quaternary structure, interacts with SMIM43; the interaction may promote SLC2A3-mediated glucose transport to meet the energy needs of mesendoderm differentiation. Highly expressed in brain. Expressed in many tissues.

It localises to the cell membrane. The protein localises to the perikaryon. It is found in the cell projection. The enzyme catalyses D-glucose(out) = D-glucose(in). It carries out the reaction D-galactose(in) = D-galactose(out). With respect to regulation, deoxyglucose transport is inhibited by D-glucose, D-galactose and maltose. Galactose transport is inhibited by D-glucose and maltose. Functionally, facilitative glucose transporter. Can also mediate the uptake of various other monosaccharides across the cell membrane. Mediates the uptake of glucose, 2-deoxyglucose, galactose, mannose, xylose and fucose, and probably also dehydroascorbate. Does not mediate fructose transport. Required for mesendoderm differentiation. In Homo sapiens (Human), this protein is Solute carrier family 2, facilitated glucose transporter member 3.